The sequence spans 843 residues: Ribosome biogenesis protein ERB1 (843 aa).

Disordered regions lie at residues K36–Y189 and A364–L419. Composition is skewed to acidic residues over residues V77–E92, S106–S139, and E163–E172. The span at P173–G183 shows a compositional bias: basic and acidic residues. Pro residues predominate over residues P379–Y396. Basic and acidic residues predominate over residues L397–W406. 6 WD repeats span residues G487 to S526, S530 to E570, K668 to I706, P709 to K754, Y758 to S797, and T813 to M843.

This sequence belongs to the WD repeat BOP1/ERB1 family. In terms of assembly, component of the NOP7 complex, composed of ERB1, NOP7 and YTM1. The complex is held together by ERB1, which interacts with NOP7 via its N-terminal domain and with YTM1 via a high-affinity interaction between the seven-bladed beta-propeller domains of the 2 proteins. The NOP7 complex associates with the 66S pre-ribosome.

It localises to the nucleus. It is found in the nucleolus. The protein localises to the nucleoplasm. Functionally, component of the NOP7 complex, which is required for maturation of the 25S and 5.8S ribosomal RNAs and formation of the 60S ribosome. The polypeptide is Ribosome biogenesis protein ERB1 (Coccidioides immitis (strain RS) (Valley fever fungus)).